Consider the following 747-residue polypeptide: Meprin A subunit alpha (747 aa).

The first 20 residues, M1 to A20, serve as a signal peptide directing secretion. A propeptide spanning residues V21–R64 is cleaved from the precursor. N-linked (GlcNAc...) asparagine glycans are attached at residues N28 and N139. The Peptidase M12A domain maps to N65–T259. At N65–M713 the chain is on the extracellular side. 3 disulfide bridges follow: C106/C258, C127/C146, and C268/C430. H154 is a binding site for Zn(2+). E155 is a catalytic residue. H158 and H164 together coordinate Zn(2+). N221, N257, N317, N413, N439, N533, and N540 each carry an N-linked (GlcNAc...) asparagine glycan. Positions T263–A432 constitute an MAM domain. Residues G433–F594 enclose the MATH domain. The tract at residues E638–E663 is disordered. Residues F671–Q711 enclose the EGF-like domain. Intrachain disulfides connect C675–C686, C680–C695, and C697–C710. A helical membrane pass occupies residues H714–T741. The Cytoplasmic portion of the chain corresponds to N742 to Q747.

In terms of assembly, homotetramer consisting of disulfide-linked alpha subunits, homooligomer consisting of disulfide-linked alpha subunit homodimers, or heterotetramer of two alpha and two beta subunits formed by non-covalent association of two disulfide-linked heterodimers. Genetic factors determine which oligomer(s) will be formed (strain-specific). Interacts with MBL2 through its carbohydrate moiety. This interaction may inhibit its catalytic activity. Requires Zn(2+) as cofactor. Post-translationally, N-glycosylated; contains GlcNAc, galactose, mannose and a small amount of fucose. In terms of tissue distribution, kidney, intestinal brush borders and salivary ducts.

The protein localises to the membrane. It catalyses the reaction Hydrolysis of protein and peptide substrates preferentially on carboxyl side of hydrophobic residues.. With respect to regulation, inhibited by metal ion chelators EDTA and 1,10-phenanthroline, bradykinin analogs, cysteine, CONA65, and several hydroxamate compounds, particularly tyrosine hydroxamate. Not inhibited by 3,4-dichloroisocourmarin, soybean trypsin inhibitor, or the cysteine proteinase inhibitors iodoacetic acid and E-64. In Mus musculus (Mouse), this protein is Meprin A subunit alpha (Mep1a).